Consider the following 87-residue polypeptide: uncharacterized protein (87 aa).

The N-terminal stretch at 1 to 22 (MKIKTTVAALSVLSVLSFGAFA) is a signal peptide.

This sequence belongs to the BhsA/McbA family.

Its subcellular location is the periplasm. This is an uncharacterized protein from Escherichia coli O6:H1 (strain CFT073 / ATCC 700928 / UPEC).